A 354-amino-acid chain; its full sequence is tRNA N6-adenosine threonylcarbamoyltransferase (354 aa).

Residues H116 and H120 each coordinate Fe cation. Residues 139–143 (LVSGG), D172, G185, and N281 each bind substrate. Position 309 (D309) interacts with Fe cation.

This sequence belongs to the KAE1 / TsaD family. Fe(2+) serves as cofactor.

It is found in the cytoplasm. The catalysed reaction is L-threonylcarbamoyladenylate + adenosine(37) in tRNA = N(6)-L-threonylcarbamoyladenosine(37) in tRNA + AMP + H(+). In terms of biological role, required for the formation of a threonylcarbamoyl group on adenosine at position 37 (t(6)A37) in tRNAs that read codons beginning with adenine. Is involved in the transfer of the threonylcarbamoyl moiety of threonylcarbamoyl-AMP (TC-AMP) to the N6 group of A37, together with TsaE and TsaB. TsaD likely plays a direct catalytic role in this reaction. The chain is tRNA N6-adenosine threonylcarbamoyltransferase from Parasynechococcus marenigrum (strain WH8102).